Here is a 174-residue protein sequence, read N- to C-terminus: Co-chaperone protein HscB homolog (174 aa).

A J domain is found at 2 to 74; that stretch reads NYFELFSLLP…IQRAEHLLTL (73 aa).

It belongs to the HscB family. Interacts with HscA and stimulates its ATPase activity.

Functionally, co-chaperone involved in the maturation of iron-sulfur cluster-containing proteins. Seems to help targeting proteins to be folded toward HscA. The polypeptide is Co-chaperone protein HscB homolog (Shewanella halifaxensis (strain HAW-EB4)).